The sequence spans 422 residues: 5-hydroxytryptamine receptor 1A (422 aa).

The interval 1–23 (MDVLSPGQGNNTTSPPAPFETGG) is disordered. Topologically, residues 1–38 (MDVLSPGQGNNTTSPPAPFETGGNTTGISDVTFSYQVI) are extracellular. N10, N11, and N24 each carry an N-linked (GlcNAc...) asparagine glycan. A helical membrane pass occupies residues 39 to 59 (TSLLLGTLIFCAVLGNACVVA). Residues 60–73 (AIALERSLQNVANY) lie on the Cytoplasmic side of the membrane. The chain crosses the membrane as a helical span at residues 74–98 (LIGSLAVTDLMVSVLVLPMAALYQV). Over 99–107 (LNKWTLGQV) the chain is Extracellular. The chain crosses the membrane as a helical span at residues 108–132 (TCDLFIALDVLCCTSSILHLCAIAL). A disulfide bond links C109 and C187. 2 residues coordinate serotonin: D116 and C120. A DRY motif; important for ligand-induced conformation changes motif is present at residues 133–135 (DRY). Topologically, residues 133–152 (DRYWAITDPIDYVNKRTPRR) are cytoplasmic. A helical membrane pass occupies residues 153–174 (AAALISLTWLIGFLISIPPMLG). The Extracellular segment spans residues 175 to 193 (WRTPEDRSDPDACTISKDH). Residues 194 to 216 (GYTIYSTFGAFYIPLLLMLVLYG) traverse the membrane as a helical segment. Residues 217–346 (RIFRAARFRI…LARERKTVKT (130 aa)) lie on the Cytoplasmic side of the membrane. Positions 235-263 (KTGADTHHGASPAPQPKKSVNGESGSRNW) are disordered. 1D-myo-inositol 4-phosphate is bound by residues T314, K345, T346, and G352. The chain crosses the membrane as a helical span at residues 347–370 (LGIIMGTFILCWLPFFIVALVLPF). Residues 371–378 (CESSCHMP) lie on the Extracellular side of the membrane. The helical transmembrane segment at 379–403 (TLLGAIINWLGYSNSLLNPVIYAYF) threads the bilayer. The NPxxY motif; important for ligand-induced conformation changes and signaling signature appears at 396–400 (NPVIY). F403, N404, and K405 together coordinate 1D-myo-inositol 4-phosphate. Residues 404 to 422 (NKDFQNAFKKIIKCKFCRQ) lie on the Cytoplasmic side of the membrane.

Belongs to the G-protein coupled receptor 1 family. 5-hydroxytryptamine receptor subfamily. HTR1A sub-subfamily. In terms of assembly, heterodimer; heterodimerizes with GPER1. Interacts with YIF1B. Interacts with GPR39 and GALR1.

It localises to the cell membrane. Its subcellular location is the cell projection. The protein localises to the dendrite. G-protein coupled receptor activity is regulated by lipids: phosphatidylinositol 4-phosphate increases HTR1A-mediated activity. G-protein coupled receptor for 5-hydroxytryptamine (serotonin). Also functions as a receptor for various drugs and psychoactive substances. Ligand binding causes a conformation change that triggers signaling via guanine nucleotide-binding proteins (G proteins) and modulates the activity of downstream effectors, such as adenylate cyclase. HTR1A is coupled to G(i)/G(o) G alpha proteins and mediates inhibitory neurotransmission: signaling inhibits adenylate cyclase activity and activates a phosphatidylinositol-calcium second messenger system that regulates the release of Ca(2+) ions from intracellular stores. Beta-arrestin family members regulate signaling by mediating both receptor desensitization and resensitization processes. The polypeptide is 5-hydroxytryptamine receptor 1A (HTR1A) (Pongo pygmaeus (Bornean orangutan)).